Reading from the N-terminus, the 527-residue chain is Peptide chain release factor 3 (527 aa).

Residues 9–277 (AKRRTFAIIS…AVVNWAPMPL (269 aa)) enclose the tr-type G domain. Residues 18-25 (SHPDAGKT), 86-90 (DTPGH), and 140-143 (NKLD) each bind GTP.

The protein belongs to the TRAFAC class translation factor GTPase superfamily. Classic translation factor GTPase family. PrfC subfamily.

The protein localises to the cytoplasm. Functionally, increases the formation of ribosomal termination complexes and stimulates activities of RF-1 and RF-2. It binds guanine nucleotides and has strong preference for UGA stop codons. It may interact directly with the ribosome. The stimulation of RF-1 and RF-2 is significantly reduced by GTP and GDP, but not by GMP. The polypeptide is Peptide chain release factor 3 (Pseudomonas syringae pv. tomato (strain ATCC BAA-871 / DC3000)).